Consider the following 57-residue polypeptide: Small ribosomal subunit protein eS27 (57 aa).

Zn(2+) is bound by residues C10, C13, C29, and C32. A C4-type zinc finger spans residues 10-32; it reads CGDCENEQVVFGKASSVVSCAVC.

This sequence belongs to the eukaryotic ribosomal protein eS27 family. In terms of assembly, part of the 30S ribosomal subunit. It depends on Zn(2+) as a cofactor.

The protein is Small ribosomal subunit protein eS27 of Halorubrum lacusprofundi (strain ATCC 49239 / DSM 5036 / JCM 8891 / ACAM 34).